The following is a 95-amino-acid chain: Co-chaperonin GroES (95 aa).

It belongs to the GroES chaperonin family. In terms of assembly, heptamer of 7 subunits arranged in a ring. Interacts with the chaperonin GroEL.

It is found in the cytoplasm. Together with the chaperonin GroEL, plays an essential role in assisting protein folding. The GroEL-GroES system forms a nano-cage that allows encapsulation of the non-native substrate proteins and provides a physical environment optimized to promote and accelerate protein folding. GroES binds to the apical surface of the GroEL ring, thereby capping the opening of the GroEL channel. This chain is Co-chaperonin GroES, found in Streptococcus mutans serotype c (strain ATCC 700610 / UA159).